Here is a 389-residue protein sequence, read N- to C-terminus: S-adenosylmethionine synthase (389 aa).

His15 is an ATP binding site. Asp17 is a Mg(2+) binding site. K(+) is bound at residue Glu43. Residues Glu56 and Gln99 each contribute to the L-methionine site. The segment at 99–109 (QSPDIAQGVNE) is flexible loop. ATP is bound by residues 166–168 (DAK), 234–235 (RF), Asp243, 249–250 (RK), Ala266, and Lys270. Asp243 provides a ligand contact to L-methionine. L-methionine is bound at residue Lys274.

Belongs to the AdoMet synthase family. Homotetramer; dimer of dimers. Requires Mg(2+) as cofactor. K(+) serves as cofactor.

It is found in the cytoplasm. It catalyses the reaction L-methionine + ATP + H2O = S-adenosyl-L-methionine + phosphate + diphosphate. Its pathway is amino-acid biosynthesis; S-adenosyl-L-methionine biosynthesis; S-adenosyl-L-methionine from L-methionine: step 1/1. In terms of biological role, catalyzes the formation of S-adenosylmethionine (AdoMet) from methionine and ATP. The overall synthetic reaction is composed of two sequential steps, AdoMet formation and the subsequent tripolyphosphate hydrolysis which occurs prior to release of AdoMet from the enzyme. The sequence is that of S-adenosylmethionine synthase from Chromobacterium violaceum (strain ATCC 12472 / DSM 30191 / JCM 1249 / CCUG 213 / NBRC 12614 / NCIMB 9131 / NCTC 9757 / MK).